The chain runs to 504 residues: Subtilisin-like protease 1 (504 aa).

An N-terminal signal peptide occupies residues 1–19 (MGVFRFISISLAAVSAANA). A propeptide spanning residues 20–116 (AQILSMPHAQ…VEPDTIVSVH (97 aa)) is cleaved from the precursor. In terms of domain architecture, Inhibitor I9 spans 34 to 116 (SYIVMMKDDT…VEPDTIVSVH (83 aa)). Positions 126–400 (SWGLARISNP…NVLINNGGAK (275 aa)) constitute a Peptidase S8 domain. Catalysis depends on charge relay system residues Asp-158 and His-190. Positions 172-198 (AIWGSNQVNDGDDRDGSGHGTHTSGTM) are disordered. Asn-233 and Asn-251 each carry an N-linked (GlcNAc...) asparagine glycan. Residues 282–294 (NDNQDAQSSSPAS) are compositionally biased toward polar residues. The tract at residues 282 to 312 (NDNQDAQSSSPASEPSVCTVGSSAEDDSRSS) is disordered. The active-site Charge relay system is the Ser-345. Positions 378–394 (TSSITDAGPGTPTNVLI) are enriched in polar residues. The interval 378-483 (TSSITDAGPG…YPGGDNFDFD (106 aa)) is disordered. Pro residues-rich tracts occupy residues 405 to 449 (NPNP…PGQP) and 457 to 473 (APAPAPMPPTPQHPHTP).

The protein belongs to the peptidase S8 family.

It is found in the secreted. In terms of biological role, secreted subtilisin-like serine protease with keratinolytic activity that contributes to pathogenicity. This Trichophyton rubrum (Athlete's foot fungus) protein is Subtilisin-like protease 1 (SUB1).